The sequence spans 640 residues: Chaperone protein dnaK2 (640 aa).

Phosphothreonine; by autocatalysis is present on Thr197. The segment at 605-640 (VYQSAQSSDGTGSSSSGGSGSGGDDEVIDAEFSETK) is disordered. The segment covering 627 to 640 (GDDEVIDAEFSETK) has biased composition (acidic residues).

Belongs to the heat shock protein 70 family.

Functionally, acts as a chaperone. The protein is Chaperone protein dnaK2 (dnaK2) of Thermosynechococcus vestitus (strain NIES-2133 / IAM M-273 / BP-1).